We begin with the raw amino-acid sequence, 260 residues long: MAATLSRLDISVDGVSVTYNNARLALYNATCTVEPGTITALVGPNGSGKSTLFKSIMGFLQPSQGRVRIGGFSVQKAQKQQLMAYVPQADEVDWNFPVSVFDVVMMGRYGYMNVLRIPSAKDRRLVMESLERVGMVKYRDRQIGELSGGQKKRAFLARALAQEGKVILLDEPFTGVDVKTEKGMIDLLMELRDEGHTILISTHDLASISTFCDHTILLNRTILAQGKTEETFTKENLELTFGGLPMLSLNQMFESTEVDA.

Residues 10–245 (ISVDGVSVTY…NLELTFGGLP (236 aa)) enclose the ABC transporter domain. Position 43 to 50 (43 to 50 (GPNGSGKS)) interacts with ATP.

This sequence belongs to the ABC transporter superfamily.

Part of an ATP-driven transport system for manganese. This is Manganese transport system ATP-binding protein MntA (mntA) from Synechocystis sp. (strain ATCC 27184 / PCC 6803 / Kazusa).